The following is an 839-amino-acid chain: Oxidation resistance protein 1 (839 aa).

Residues 38-91 are disordered; the sequence is DYLREPAPGDPGCGPGELRPPSPTSPEGPDTGQKKTLDKKDGRRMSFQKPKGTI. Residues 69–81 show a composition bias toward basic and acidic residues; it reads GQKKTLDKKDGRR. At Ser83 the chain carries Phosphoserine. Positions 91–134 constitute a LysM domain; the sequence is IEYTVESRDSLNSIALKFDTTPNELVQLNKLFSRAVVTGQVLYV. Thr111 bears the Phosphothreonine mark. The segment covering 140 to 161 has biased composition (low complexity); it reads VSSVESSPSLSPVSPLSPTSSE. A disordered region spans residues 140–195; sequence VSSVESSPSLSPVSPLSPTSSEAEFDKTTTPDVVHPKEAPPSSTESSIRPARVVSS. Basic and acidic residues predominate over residues 163-177; sequence EFDKTTTPDVVHPKE. Phosphoserine occurs at positions 194, 195, and 197. A GRAM domain is found at 206–261; that stretch reads KFLKINCKYITNGKGTVSGVLLVTPNNIMFDPHKTDPLVQENGCEEYGIMCPMEEV. Phosphoserine is present on residues Ser287, Ser327, and Ser329. 2 disordered regions span residues 292–401 and 415–540; these read CHSK…VGAL and KEGD…SLLK. Thr334 carries the post-translational modification Phosphothreonine. A Phosphoserine modification is found at Ser339. Residues 340-356 are compositionally biased toward basic and acidic residues; that stretch reads PIREELPSSELRQEKSS. Polar residues-rich tracts occupy residues 357 to 378 and 387 to 397; these read DASS…TAAS and TNANSGRSSSE. Composition is skewed to basic and acidic residues over residues 433–450 and 469–497; these read QSTD…HHEN and LTEK…ELRK. The residue at position 488 (Ser488) is a Phosphoserine. Polar residues predominate over residues 502-519; the sequence is HSMQQAKQQRDTIQQVAQ. The mediates oxidative antimutator activity stretch occupies residues 543–570; that stretch reads RRHRLHKFLCLRVGKPMRKTFVSQASAT. The interval 648–677 is disordered; that stretch reads TREDINSKQAAPAKADLEPESFRPNLSDPS. In terms of domain architecture, TLDc spans 678–839; the sequence is ELLLPDQIEK…IQDIEIWAFE (162 aa).

This sequence belongs to the OXR1 family.

The protein resides in the mitochondrion. Functionally, may be involved in protection from oxidative damage. This Rattus norvegicus (Rat) protein is Oxidation resistance protein 1 (Oxr1).